The sequence spans 590 residues: Fucose-1-phosphate guanylyltransferase (590 aa).

Expressed at highest levels in brain, moderately in testis, ovary and kidney, and weakly in liver, spleen, heart and lung.

The protein localises to the cytoplasm. The enzyme catalyses beta-L-fucose 1-phosphate + GTP + H(+) = GDP-beta-L-fucose + diphosphate. Its function is as follows. Catalyzes the formation of GDP-L-fucose from GTP and L-fucose-1-phosphate. Functions as a salvage pathway to reutilize L-fucose arising from the turnover of glycoproteins and glycolipids. This is Fucose-1-phosphate guanylyltransferase from Mus musculus (Mouse).